A 36-amino-acid chain; its full sequence is Histone H1-like protein EM5 (36 aa).

Residues 1 to 36 (MITAAVGALKERGGSSRQAILKYIQANFKVQANPAA) enclose the H15 domain.

Belongs to the histone H1/H5 family. Sperm.

It is found in the nucleus. It localises to the chromosome. The protein is Histone H1-like protein EM5 of Ensis minor (Razor shell).